The following is a 164-amino-acid chain: Probable Brix domain-containing ribosomal biogenesis protein (164 aa).

Residues 1 to 164 (MIITTSRKPS…IKTVKILDIE (164 aa)) form the Brix domain.

Its function is as follows. Probably involved in the biogenesis of the ribosome. This Methanococcus maripaludis (strain DSM 14266 / JCM 13030 / NBRC 101832 / S2 / LL) protein is Probable Brix domain-containing ribosomal biogenesis protein.